The following is a 242-amino-acid chain: Uridylate kinase (242 aa).

16–19 (KVSG) provides a ligand contact to ATP. A UMP-binding site is contributed by Gly58. Residues Gly59 and Arg63 each coordinate ATP. Residues Asp78 and 139 to 146 (TGNPFCTT) contribute to the UMP site. ATP is bound by residues Thr166, Gln167, Tyr172, and Asp175.

This sequence belongs to the UMP kinase family. As to quaternary structure, homohexamer.

The protein localises to the cytoplasm. The enzyme catalyses UMP + ATP = UDP + ADP. It participates in pyrimidine metabolism; CTP biosynthesis via de novo pathway; UDP from UMP (UMPK route): step 1/1. Inhibited by UTP. Its function is as follows. Catalyzes the reversible phosphorylation of UMP to UDP. This is Uridylate kinase from Rickettsia massiliae (strain Mtu5).